A 213-amino-acid chain; its full sequence is Probable aspartate aminotransferase (213 aa).

The L-aspartate site is built by Gly-47, Trp-133, and Asn-183.

Belongs to the class-I pyridoxal-phosphate-dependent aminotransferase family. As to quaternary structure, homodimer. Requires pyridoxal 5'-phosphate as cofactor.

Its subcellular location is the cytoplasm. It carries out the reaction L-aspartate + 2-oxoglutarate = oxaloacetate + L-glutamate. The polypeptide is Probable aspartate aminotransferase (aspC) (Streptomyces griseus).